We begin with the raw amino-acid sequence, 141 residues long: Large ribosomal subunit protein uL11A (141 aa).

The protein belongs to the universal ribosomal protein uL11 family. As to quaternary structure, part of the ribosomal stalk of the 50S ribosomal subunit. Interacts with L10 and the large rRNA to form the base of the stalk. L10 forms an elongated spine to which L12 dimers bind in a sequential fashion forming a multimeric L10(L12)X complex. One or more lysine residues are methylated.

Forms part of the ribosomal stalk which helps the ribosome interact with GTP-bound translation factors. The polypeptide is Large ribosomal subunit protein uL11A (Bacillus cereus (strain ATCC 14579 / DSM 31 / CCUG 7414 / JCM 2152 / NBRC 15305 / NCIMB 9373 / NCTC 2599 / NRRL B-3711)).